Reading from the N-terminus, the 276-residue chain is Secretagogin (276 aa).

EF-hand domains are found at residues 12–47 (LDAA…LLAK), 58–93 (NVQK…EDEN), 105–140 (DNSV…LFLH), 149–184 (ELEE…QENF), 197–232 (ERKR…MMEL), and 240–276 (VDLD…KINP). Ca(2+) is bound by residues D25, Y31, E36, S73, E75, R77, E82, D118, D120, S122, E129, D162, N164, D166, R168, D173, D210, S212, T214, E221, D254, N256, D258, K260, and E265.

The protein resides in the cytoplasm. It localises to the secreted. Its subcellular location is the cytoplasmic vesicle. The protein localises to the secretory vesicle membrane. This chain is Secretagogin (Scgn), found in Mus musculus (Mouse).